A 251-amino-acid polypeptide reads, in one-letter code: Isopentenyl-diphosphate delta-isomerase (251 aa).

Residue Lys-49 participates in substrate binding. His-53 and His-66 together coordinate Mg(2+). A Nudix hydrolase domain is found at 64–212 (LLHRAFSVFL…SNSFTPWFKL (149 aa)). Arg-86 and Lys-90 together coordinate substrate. Cys-102 is a catalytic residue. Ser-103 lines the substrate pocket. The Mg(2+) site is built by Glu-162 and Glu-164. Glu-164 is a catalytic residue.

The protein belongs to the IPP isomerase type 1 family. Requires Mg(2+) as cofactor.

It localises to the cytoplasm. The catalysed reaction is isopentenyl diphosphate = dimethylallyl diphosphate. It participates in isoprenoid biosynthesis; dimethylallyl diphosphate biosynthesis; dimethylallyl diphosphate from isopentenyl diphosphate: step 1/1. Its function is as follows. Isopentenyl-diphosphate delta-isomerase; part of the second module of ergosterol biosynthesis pathway that includes the middle steps of the pathway. The second module is carried out in the vacuole and involves the formation of farnesyl diphosphate, which is also an important intermediate in the biosynthesis of ubiquinone, dolichol, heme and prenylated proteins. Activity by the mevalonate kinase first converts mevalonate into 5-phosphomevalonate. 5-phosphomevalonate is then further converted to 5-diphosphomevalonate by the phosphomevalonate kinase. The diphosphomevalonate decarboxylase then produces isopentenyl diphosphate. The isopentenyl-diphosphate delta-isomerase then catalyzes the 1,3-allylic rearrangement of the homoallylic substrate isopentenyl (IPP) to its highly electrophilic allylic isomer, dimethylallyl diphosphate (DMAPP). Finally the farnesyl diphosphate synthase catalyzes the sequential condensation of isopentenyl pyrophosphate with dimethylallyl pyrophosphate, and then with the resultant geranylpyrophosphate to the ultimate product farnesyl pyrophosphate. The chain is Isopentenyl-diphosphate delta-isomerase from Phaffia rhodozyma (Yeast).